The following is a 294-amino-acid chain: Glutamate-binding protein GluB (294 aa).

A signal peptide spans 1-26 (MSHKRMFTRLAAATSAAVLAGITLTA). Cysteine 27 carries the N-palmitoyl cysteine lipid modification. Cysteine 27 carries S-diacylglycerol cysteine lipidation.

Belongs to the bacterial solute-binding protein 3 family. In terms of assembly, the complex is composed of two ATP-binding proteins (GluA), two transmembrane proteins (GluC and GluD) and a solute-binding protein (GluB).

The protein localises to the cell membrane. Part of the ABC transporter complex GluABCD involved in glutamate uptake. Binds glutamate with a high affinity. This chain is Glutamate-binding protein GluB, found in Corynebacterium efficiens (strain DSM 44549 / YS-314 / AJ 12310 / JCM 11189 / NBRC 100395).